A 25-amino-acid polypeptide reads, in one-letter code: Germin-like protein (25 aa).

It belongs to the germin family.

This chain is Germin-like protein, found in Populus euphratica (Euphrates poplar).